The primary structure comprises 428 residues: Tryptophan synthase beta chain (428 aa).

The residue at position 92 (Lys92) is an N6-(pyridoxal phosphate)lysine.

Belongs to the TrpB family. Tetramer of two alpha and two beta chains. Requires pyridoxal 5'-phosphate as cofactor.

The enzyme catalyses (1S,2R)-1-C-(indol-3-yl)glycerol 3-phosphate + L-serine = D-glyceraldehyde 3-phosphate + L-tryptophan + H2O. The protein operates within amino-acid biosynthesis; L-tryptophan biosynthesis; L-tryptophan from chorismate: step 5/5. Functionally, the beta subunit is responsible for the synthesis of L-tryptophan from indole and L-serine. The chain is Tryptophan synthase beta chain from Leptothrix cholodnii (strain ATCC 51168 / LMG 8142 / SP-6) (Leptothrix discophora (strain SP-6)).